Reading from the N-terminus, the 217-residue chain is Nucleoside diphosphate-linked moiety X motif 6 (217 aa).

Positions 42–177 (THQVGVAGAV…VAKLLLYGYN (136 aa)) constitute a Nudix hydrolase domain. The Nudix box signature appears at 77–98 (GLSDQGEDIGATAVREVLEETG).

It belongs to the Nudix hydrolase family. As to expression, detected in liver (at protein level).

It localises to the cytoplasm. The protein resides in the nucleus. It is found in the mitochondrion. Its function is as follows. May contribute to the regulation of cell proliferation. This Xenopus laevis (African clawed frog) protein is Nucleoside diphosphate-linked moiety X motif 6 (nudt6).